Consider the following 564-residue polypeptide: Dihydroxy-acid dehydratase (564 aa).

Cysteine 55 contributes to the [2Fe-2S] cluster binding site. Aspartate 87 is a binding site for Mg(2+). Cysteine 128 contributes to the [2Fe-2S] cluster binding site. Residues aspartate 129 and lysine 130 each coordinate Mg(2+). Position 130 is an N6-carboxylysine (lysine 130). Residue cysteine 200 participates in [2Fe-2S] cluster binding. Glutamate 452 provides a ligand contact to Mg(2+). The Proton acceptor role is filled by serine 478.

The protein belongs to the IlvD/Edd family. As to quaternary structure, homodimer. [2Fe-2S] cluster is required as a cofactor. The cofactor is Mg(2+).

The enzyme catalyses (2R)-2,3-dihydroxy-3-methylbutanoate = 3-methyl-2-oxobutanoate + H2O. It carries out the reaction (2R,3R)-2,3-dihydroxy-3-methylpentanoate = (S)-3-methyl-2-oxopentanoate + H2O. Its pathway is amino-acid biosynthesis; L-isoleucine biosynthesis; L-isoleucine from 2-oxobutanoate: step 3/4. The protein operates within amino-acid biosynthesis; L-valine biosynthesis; L-valine from pyruvate: step 3/4. Functions in the biosynthesis of branched-chain amino acids. Catalyzes the dehydration of (2R,3R)-2,3-dihydroxy-3-methylpentanoate (2,3-dihydroxy-3-methylvalerate) into 2-oxo-3-methylpentanoate (2-oxo-3-methylvalerate) and of (2R)-2,3-dihydroxy-3-methylbutanoate (2,3-dihydroxyisovalerate) into 2-oxo-3-methylbutanoate (2-oxoisovalerate), the penultimate precursor to L-isoleucine and L-valine, respectively. This Polaromonas naphthalenivorans (strain CJ2) protein is Dihydroxy-acid dehydratase.